Consider the following 288-residue polypeptide: Borealin (288 aa).

The tract at residues 1–58 (MAPKKRSSRGTRTNTLRSRKLASFLKDFDREVQVRTKQIESDRQTLLKEVENLYNIEV) is required for interaction with INCENP. The tract at residues 1–88 (MAPKKRSSRG…NRQALEEAAT (88 aa)) is required for centromere localization. The segment at 1–149 (MAPKKRSSRG…RKSHKNLRSA (149 aa)) is required for interaction with SENP3. The tract at residues 10–109 (GTRTNTLRSR…TAEAIQTPLK (100 aa)) is required to form a minimal CPC core complex that localizes to the central spindle and midbody and properly executes the role of the CPC during cytokinesis. The interval 20 to 78 (KLASFLKDFDREVQVRTKQIESDRQTLLKEVENLYNIEVLRLPKALQVMKWLDYFALGG) is required for interaction with INCENP and BIRC5. T88 bears the Phosphothreonine; by TTK mark. R91 bears the Citrulline mark. T94 carries the post-translational modification Phosphothreonine; by TTK. T106 is modified (phosphothreonine). S110 is modified (phosphoserine). Residues 124–134 (KEEEEDEEEEG) are compositionally biased toward acidic residues. The interval 124 to 173 (KEEEEDEEEEGGGGGGRKSHKNLRSARVKRCPPSKKRTQSIQGRSRSKRL) is disordered. Over residues 140 to 161 (RKSHKNLRSARVKRCPPSKKRT) the composition is skewed to basic residues. K144 participates in a covalent cross-link: Glycyl lysine isopeptide (Lys-Gly) (interchain with G-Cter in SUMO2). Phosphoserine; by AURKB is present on S174. Residues T197 and T212 each carry the phosphothreonine modification. A phosphoserine mark is found at S227, S232, S246, and S252.

Belongs to the borealin family. As to quaternary structure, may form homooligomers and homodimers. Component of the chromosomal passenger complex (CPC) composed of at least BIRC5/survivin, CDCA8/borealin, INCENP, AURKB or AURKC; in the complex forms a triple-helix bundle-based subcomplex with INCENP and BIRC5. Interacts with SENP3, UBE2I and RANBP2. Interacts (phosphorylated) with SGO1 and SGO2; the association is dependent on CDK1. Post-translationally, phosphorylated by TTK, essentially at Thr-88 and Thr-94. Phosphorylation (probably by CDK1) promotes targeting of the CPC to centromeric DNA. In terms of processing, sumoylated by UBE2I and RANBP2. Desumoylated by SENP3 through the removal of SUMO2 and SUMO3. Citrullinated by PADI4.

The protein localises to the nucleus. The protein resides in the nucleolus. Its subcellular location is the cytoplasm. It localises to the chromosome. It is found in the centromere. The protein localises to the cytoskeleton. The protein resides in the spindle. Functionally, component of the chromosomal passenger complex (CPC), a complex that acts as a key regulator of mitosis. The CPC complex has essential functions at the centromere in ensuring correct chromosome alignment and segregation and is required for chromatin-induced microtubule stabilization and spindle assembly. In the complex, it may be required to direct the CPC to centromeric DNA. This Rattus norvegicus (Rat) protein is Borealin (Cdca8).